Here is an 860-residue protein sequence, read N- to C-terminus: Probable linoleate 9S-lipoxygenase 4 (860 aa).

The PLAT domain occupies 29-159; that stretch reads NALDFTDLAG…RYKSDRIFFA (131 aa). The Lipoxygenase domain occupies 162–860; that stretch reads PYLPSETPEL…GKGIPNSVSI (699 aa). Residues 209–246 are disordered; that stretch reads PDQGKENVRTTLGGSADYPYPRRGRTGRPPTRTDPKSE. The Fe cation site is built by H521, H526, H712, N716, and I860.

Belongs to the lipoxygenase family. As to quaternary structure, monomer. Fe cation is required as a cofactor. As to expression, expressed in tubers and roots. Not detected in leaves, flowers, stems, shoot tips, or axillary buds.

The protein localises to the cytoplasm. It carries out the reaction (9Z,12Z)-octadecadienoate + O2 = (9S)-hydroperoxy-(10E,12Z)-octadecadienoate. The protein operates within lipid metabolism; oxylipin biosynthesis. Functionally, plant lipoxygenases may be involved in a number of diverse aspects of plant physiology including growth and development, pest resistance, and senescence or responses to wounding. Catalyzes the hydroperoxidation of lipids containing a cis,cis-1,4-pentadiene structure. The sequence is that of Probable linoleate 9S-lipoxygenase 4 (LOX1.4) from Solanum tuberosum (Potato).